Here is a 233-residue protein sequence, read N- to C-terminus: Nickel import system ATP-binding protein NikE (233 aa).

In terms of domain architecture, ABC transporter spans 2–228; it reads IELKHVTFGY…DRHSYTKELV (227 aa). Position 35 to 42 (35 to 42) interacts with ATP; it reads GESGCGKS.

The protein belongs to the ABC transporter superfamily. The complex is composed of two ATP-binding proteins (NikD and NikE), two transmembrane proteins (NikB and NikC) and a solute-binding protein (NikA).

It is found in the cell membrane. It catalyses the reaction Ni(2+)(out) + ATP + H2O = Ni(2+)(in) + ADP + phosphate + H(+). Its function is as follows. Part of the ABC transporter complex NikABCDE (Opp2) involved in nickel import. Probably responsible for energy coupling to the transport system. In Staphylococcus aureus (strain bovine RF122 / ET3-1), this protein is Nickel import system ATP-binding protein NikE.